We begin with the raw amino-acid sequence, 531 residues long: Putative lipase ATG15 (531 aa).

Topologically, residues 1-11 are cytoplasmic; that stretch reads MKPGIKISKRY. The helical; Signal-anchor for type II membrane protein transmembrane segment at 12–31 threads the bilayer; the sequence is SARNASVITVLLLLIYLIYI. Over 32-531 the chain is Lumenal; the sequence is NKETIQTKYQ…WIGICTEYGI (500 aa). N-linked (GlcNAc...) asparagine glycosylation is found at asparagine 178 and asparagine 207. The Charge relay system role is filled by serine 340. The interval 482 to 513 is disordered; that stretch reads VPKKHKSSSSTASSTSAETSTLTVGPSPPEKT. Residues 489-502 are compositionally biased toward low complexity; that stretch reads SSSTASSTSAETST.

Belongs to the AB hydrolase superfamily. Lipase family. Binds to both phosphatidylinositol (PI) and phosphatidylinositol 3,5-bisphosphate (PIP2).

It is found in the endosome. It localises to the multivesicular body membrane. Its subcellular location is the prevacuolar compartment membrane. It carries out the reaction a triacylglycerol + H2O = a diacylglycerol + a fatty acid + H(+). Its function is as follows. Lipase which is essential for lysis of subvacuolar cytoplasm to vacuole targeted bodies and intravacuolar autophagic bodies. Involved in the lysis of intravacuolar multivesicular body (MVB) vesicles. The intravacuolar membrane disintegration by ATG15 is critical to life span extension. The sequence is that of Putative lipase ATG15 (ATG15) from Kluyveromyces lactis (strain ATCC 8585 / CBS 2359 / DSM 70799 / NBRC 1267 / NRRL Y-1140 / WM37) (Yeast).